The chain runs to 206 residues: Small ribosomal subunit protein uS4 (206 aa).

Residues 96 to 156 form the S4 RNA-binding domain; sequence SRLDNVVYRM…EKSKKQLRIQ (61 aa).

It belongs to the universal ribosomal protein uS4 family. Part of the 30S ribosomal subunit. Contacts protein S5. The interaction surface between S4 and S5 is involved in control of translational fidelity.

In terms of biological role, one of the primary rRNA binding proteins, it binds directly to 16S rRNA where it nucleates assembly of the body of the 30S subunit. Functionally, with S5 and S12 plays an important role in translational accuracy. This is Small ribosomal subunit protein uS4 from Francisella philomiragia subsp. philomiragia (strain ATCC 25017 / CCUG 19701 / FSC 153 / O#319-036).